The following is a 648-amino-acid chain: Protein teflon (648 aa).

The C2H2-type 1 zinc-finger motif lies at 33 to 56; sequence LYCHFCRDLFTQLPEFLRHLQGAH. Disordered stretches follow at residues 76–127 and 146–170; these read SGEQ…GSQN and EHIN…NSES. The segment covering 85–94 has biased composition (polar residues); that stretch reads VGHNSSSSDS. Over residues 96-107 the composition is skewed to basic and acidic residues; sequence GLAKSEDSRATE. The C2H2-type 2; degenerate zinc-finger motif lies at 598–620; the sequence is YFCKCCDDIFTLNEDYIRHLVSQ. Residues 624–647 form a C2H2-type 3 zinc finger; it reads YQCTKCIKTFKYQGHYDKHMRTVH.

It belongs to the Teflon family.

The protein resides in the nucleus. It localises to the chromosome. In terms of biological role, specifically required in males for proper segregation of autosomal bivalents at meiosis I. Expression is required in the male germ line prior to spermatocyte stage S4. May have a role as a bridging molecule maintaining adhesion to hold autosome bivalents together via heterochromatic connections. This Drosophila yakuba (Fruit fly) protein is Protein teflon.